The following is a 300-amino-acid chain: MKFLLDILLLLPLLIVCSLESFVKLFIPKRRKSVTGEIVLITGAGHGIGRLTAYEFAKLKSKLVLWDINKHGLEETAAKCKGLGAKVHTFVVDCSNREDIYSSAKKVKAEIGDVSILVNNAGVVYTSDLFATQDPQIEKTFEVNVLAHFWTTKAFLPAMTKNNHGHIVTVASAAGHVSVPFLLAYCSSKFAAVGFHKTLTDELAALQITGVKTTCLCPNFVNTGFIKNPSTSLGPTLEPEEVVNRLMHGILTEQKMIFIPSSIAFLTTLERILPERFLAVLKRKISVKFDAVIGYKMKAQ.

The signal sequence occupies residues 1–19; sequence MKFLLDILLLLPLLIVCSL. 40–64 provides a ligand contact to NADP(+); sequence LITGAGHGIGRLTAYEFAKLKSKLV. S172 contacts substrate. The Proton acceptor role is filled by Y185.

This sequence belongs to the short-chain dehydrogenases/reductases (SDR) family. 17-beta-HSD 3 subfamily. Present at high level in steroidogenic cells such as syncytiotrophoblasts, sebaceous gland, Leydig cells, and granulosa cells of the dominant follicle and corpus luteum. In lung, it is detected in the ciliated epithelium and in acini of adult trachea, in bronchioles, but not in alveoli. In the eye, it is detected in the nonpigmented epithelium of the ciliary body and, at lower level, in the inner nuclear layer of the retina (at protein level). Widely expressed. Highly expressed in retina, pancreas, kidney, liver, lung, adrenal, small intestine, ovary and heart.

The protein resides in the endoplasmic reticulum. It is found in the lipid droplet. It carries out the reaction 17beta-estradiol + NAD(+) = estrone + NADH + H(+). The catalysed reaction is 17beta-estradiol + NADP(+) = estrone + NADPH + H(+). In terms of biological role, can convert androstan-3-alpha,17-beta-diol (3-alpha-diol) to androsterone in vitro, suggesting that it may participate in androgen metabolism during steroidogenesis. May act by metabolizing compounds that stimulate steroid synthesis and/or by generating metabolites that inhibit it. Has no activity toward DHEA (dehydroepiandrosterone), or A-dione (4-androste-3,17-dione), and only a slight activity toward testosterone to A-dione. Tumor-associated antigen in cutaneous T-cell lymphoma. In Homo sapiens (Human), this protein is Estradiol 17-beta-dehydrogenase 11 (HSD17B11).